The chain runs to 573 residues: Septation ring formation regulator EzrA (573 aa).

Over 1–2 (MQ) the chain is Extracellular. Residues 3–21 (VAIGIVVVAIVIYAAVKGF) form a helical membrane-spanning segment. Residues 22-573 (QFYIDKQVRQ…KQADKMNDEA (552 aa)) are Cytoplasmic-facing. Coiled coils occupy residues 100-188 (DAQQ…LAKA), 317-364 (LTHA…VYQA), and 416-488 (ETLQ…TLKE).

Belongs to the EzrA family.

It localises to the cell membrane. In terms of biological role, negative regulator of FtsZ ring formation; modulates the frequency and position of FtsZ ring formation. Inhibits FtsZ ring formation at polar sites. Interacts either with FtsZ or with one of its binding partners to promote depolymerization. In Lactiplantibacillus plantarum (strain ATCC BAA-793 / NCIMB 8826 / WCFS1) (Lactobacillus plantarum), this protein is Septation ring formation regulator EzrA.